Reading from the N-terminus, the 606-residue chain is Melanoma-associated antigen D2 (606 aa).

Disordered regions lie at residues methionine 1 to threonine 29 and serine 52 to arginine 204. Residue serine 2 is modified to N-acetylserine. Serine 5 carries the phosphoserine modification. Threonine 72 is modified (phosphothreonine). A compositionally biased stretch (polar residues) spans proline 79–lysine 100. A compositionally biased stretch (basic and acidic residues) spans glutamate 122 to aspartate 131. Positions glutamate 142–glutamate 164 are enriched in low complexity. Serine 157 is subject to Phosphoserine. Basic residues predominate over residues lysine 171–lysine 181. Residues serine 190, serine 191, serine 194, serine 197, serine 244, and serine 247 each carry the phosphoserine modification. The span at proline 248–alanine 260 shows a compositional bias: basic residues. Residues proline 248–aspartate 275 are disordered. Residues serine 264 and serine 265 each carry the phosphoserine modification. The 200-residue stretch at leucine 279 to alanine 478 folds into the MAGE domain. Residues glycine 534–alanine 563 form a disordered region.

In terms of assembly, interacts with GNAS.

Its function is as follows. Regulates the expression, localization to the plasma membrane and function of the sodium chloride cotransporters SLC12A1 and SLC12A3, two key components of salt reabsorption in the distal renal tubule. This chain is Melanoma-associated antigen D2 (MAGED2), found in Pongo abelii (Sumatran orangutan).